We begin with the raw amino-acid sequence, 527 residues long: MGSQKRLVQRVERKLEQTVGDAFARIFGGSIVPQEVEALLRREAADGIQSLQGNRLLAPNEYIITLGVHDFEKLGADPELKSTGFARDLADYIQEQGWQTYGDVVVRFEQSSNLHTGQFRARGTVNPDVETHPPVIDCARPQSNHAFGAEPGVAPMSDNSSYRGGQGQGRPDEYYDDRYARPQEDPRGGPDPQGGSDPRGGYPPETGGYPPQPGYPRPRHPDQGDYPEQIGYPDQGGYPEQRGYPEQRGYPDQRGYQDQGRGYPDQGQGGYPPPYEQRPPVSPGPAAGYGAPGYDQGYRQSGGYGPSPGGGQPGYGGYGEYGRGPARHEEGSYVPSGPPGPPEQRPAYPDQGGYDQGYQQGATTYGRQDYGGGADYTRYTESPRVPGYAPQGGGYAEPAGRDYDYGQSGAPDYGQPAPGGYSGYGQGGYGSAGTSVTLQLDDGSGRTYQLREGSNIIGRGQDAQFRLPDTGVSRRHLEIRWDGQVALLADLNSTNGTTVNNAPVQEWQLADGDVIRLGHSEIIVRMH.

T116 carries the post-translational modification Phosphothreonine. The segment at 119 to 426 (FRARGTVNPD…APGGYSGYGQ (308 aa)) is disordered. A compositionally biased stretch (basic and acidic residues) spans 170–188 (RPDEYYDDRYARPQEDPRG). Composition is skewed to low complexity over residues 199-209 (RGGYPPETGGY) and 256-266 (YQDQGRGYPDQ). Residues 271–283 (YPPPYEQRPPVSP) are compositionally biased toward pro residues. A compositionally biased stretch (low complexity) spans 284-299 (GPAAGYGAPGYDQGYR). The segment covering 300–322 (QSGGYGPSPGGGQPGYGGYGEYG) has biased composition (gly residues). A compositionally biased stretch (low complexity) spans 345–366 (RPAYPDQGGYDQGYQQGATTYG). The region spanning 455-504 (NIIGRGQDAQFRLPDTGVSRRHLEIRWDGQVALLADLNSTNGTTVNNAPV) is the FHA domain.

In terms of assembly, interacts with (phosphorylated) MviN and (phosphorylated) PknB via the FHA domain. Binds to the PknB juxtamembrane domain with an affinity that is modulated by the degree and the pattern of phosphorylation of this juxtamembrane domain. Post-translationally, phosphorylated by PknB.

It localises to the cytoplasm. Regulates cell growth and peptidoglycan synthesis by binding to MviN. May inhibit the late stages of peptidoglycan synthesis. This is FHA domain-containing protein FhaA (fhaA) from Mycobacterium tuberculosis (strain ATCC 25618 / H37Rv).